Reading from the N-terminus, the 309-residue chain is Probable ABC transporter permease protein y4oQ (309 aa).

The next 7 membrane-spanning stretches (helical) occupy residues 25 to 45, 89 to 109, 123 to 143, 174 to 194, 221 to 241, 246 to 266, and 278 to 298; these read VVWF…VPLV, LIYA…FAVL, LMLI…KLLY, VIIV…LAGL, LPHL…GVMA, IFLL…VYAY, and TTAI…PLIW. In terms of domain architecture, ABC transmembrane type-1 spans 85–296; that stretch reads IRVTLIYAVV…VFVLAISAPL (212 aa).

This sequence belongs to the binding-protein-dependent transport system permease family. MalFG subfamily.

Its subcellular location is the cell inner membrane. Functionally, probably part of the binding-protein-dependent transport system y4oPQRS. This system probably transports a sugar-like molecule. Probably responsible for the translocation of the substrate across the membrane. This chain is Probable ABC transporter permease protein y4oQ, found in Sinorhizobium fredii (strain NBRC 101917 / NGR234).